The sequence spans 689 residues: Glycine--tRNA ligase beta subunit (689 aa).

The protein belongs to the class-II aminoacyl-tRNA synthetase family. As to quaternary structure, tetramer of two alpha and two beta subunits.

The protein resides in the cytoplasm. The catalysed reaction is tRNA(Gly) + glycine + ATP = glycyl-tRNA(Gly) + AMP + diphosphate. The polypeptide is Glycine--tRNA ligase beta subunit (Escherichia coli O8 (strain IAI1)).